Here is a 343-residue protein sequence, read N- to C-terminus: Probable transcription factor MYB58 (343 aa).

The disordered stretch occupies residues 1–30 (MARAPGGVRRRSGRRGAGGGGAGGGGEALR). Over residues 15–27 (RGAGGGGAGGGGE) the composition is skewed to gly residues. 2 HTH myb-type domains span residues 26–78 (GEAL…VNKL) and 79–134 (RPNL…KRLA). DNA-binding regions (H-T-H motif) lie at residues 54–77 (WSSIRSKGLLPRTGKSCRLRWVNK) and 107–130 (WARIATYLQGRTDNDVKNFWSTRQ). Disordered stretches follow at residues 137 to 169 (LRGPLPAARPNKHNSGKGKAPSSSSLDSQTATF), 219 to 238 (PPADGEASSSNAAQSAPPPL), and 307 to 343 (DDLPPNMFDDAVDQPPPPPPPPPPPSPSPSPSRDDVL). A compositionally biased stretch (polar residues) spans 157–169 (PSSSSLDSQTATF). The segment covering 320–336 (QPPPPPPPPPPPSPSPS) has biased composition (pro residues).

Its subcellular location is the nucleus. Its function is as follows. Probable transcription factor. This chain is Probable transcription factor MYB58, found in Oryza sativa subsp. japonica (Rice).